A 104-amino-acid polypeptide reads, in one-letter code: Integration host factor subunit beta (104 aa).

Belongs to the bacterial histone-like protein family. Heterodimer of an alpha and a beta chain.

Functionally, this protein is one of the two subunits of integration host factor, a specific DNA-binding protein that functions in genetic recombination as well as in transcriptional and translational control. The chain is Integration host factor subunit beta from Chromobacterium violaceum (strain ATCC 12472 / DSM 30191 / JCM 1249 / CCUG 213 / NBRC 12614 / NCIMB 9131 / NCTC 9757 / MK).